The following is a 179-amino-acid chain: Large ribosomal subunit protein uL5 (179 aa).

The protein belongs to the universal ribosomal protein uL5 family. Part of the 50S ribosomal subunit; part of the 5S rRNA/L5/L18/L25 subcomplex. Contacts the 5S rRNA and the P site tRNA. Forms a bridge to the 30S subunit in the 70S ribosome.

This is one of the proteins that bind and probably mediate the attachment of the 5S RNA into the large ribosomal subunit, where it forms part of the central protuberance. In the 70S ribosome it contacts protein S13 of the 30S subunit (bridge B1b), connecting the 2 subunits; this bridge is implicated in subunit movement. Contacts the P site tRNA; the 5S rRNA and some of its associated proteins might help stabilize positioning of ribosome-bound tRNAs. This Rickettsia prowazekii (strain Madrid E) protein is Large ribosomal subunit protein uL5.